The sequence spans 404 residues: Imidazolonepropionase (404 aa).

Residues His-70 and His-72 each coordinate Fe(3+). Zn(2+) contacts are provided by His-70 and His-72. Arg-79, Tyr-142, and His-174 together coordinate 4-imidazolone-5-propanoate. Tyr-142 contributes to the N-formimidoyl-L-glutamate binding site. His-234 is a binding site for Fe(3+). His-234 contacts Zn(2+). Glu-237 lines the 4-imidazolone-5-propanoate pocket. Residue Asp-308 participates in Fe(3+) binding. Residue Asp-308 coordinates Zn(2+).

Belongs to the metallo-dependent hydrolases superfamily. HutI family. The cofactor is Zn(2+). It depends on Fe(3+) as a cofactor.

It localises to the cytoplasm. The catalysed reaction is 4-imidazolone-5-propanoate + H2O = N-formimidoyl-L-glutamate. The protein operates within amino-acid degradation; L-histidine degradation into L-glutamate; N-formimidoyl-L-glutamate from L-histidine: step 3/3. In terms of biological role, catalyzes the hydrolytic cleavage of the carbon-nitrogen bond in imidazolone-5-propanoate to yield N-formimidoyl-L-glutamate. It is the third step in the universal histidine degradation pathway. The chain is Imidazolonepropionase from Thermoplasma volcanium (strain ATCC 51530 / DSM 4299 / JCM 9571 / NBRC 15438 / GSS1).